The following is a 926-amino-acid chain: Beta-mannosidase A (926 aa).

An N-terminal signal peptide occupies residues 1 to 21; it reads MHVKAETVLALLTPAPPSVVG. Residues asparagine 40, asparagine 242, asparagine 277, asparagine 311, and asparagine 342 are each glycosylated (N-linked (GlcNAc...) asparagine). The Proton donor role is filled by glutamate 474. Residues asparagine 532, asparagine 603, asparagine 626, asparagine 653, asparagine 733, asparagine 756, asparagine 785, asparagine 793, asparagine 819, and asparagine 905 are each glycosylated (N-linked (GlcNAc...) asparagine).

Belongs to the glycosyl hydrolase 2 family. Beta-mannosidase A subfamily. In terms of assembly, homodimer.

Its subcellular location is the secreted. The catalysed reaction is Hydrolysis of terminal, non-reducing beta-D-mannose residues in beta-D-mannosides.. The protein operates within glycan metabolism; N-glycan degradation. Exoglycosidase that cleaves the single beta-linked mannose residue from the non-reducing end of beta-mannosidic oligosaccharides of various complexity and length. Involved in the degradation of polymeric mannan and galactomannan. The chain is Beta-mannosidase A (mndA) from Aspergillus fumigatus (strain CBS 144.89 / FGSC A1163 / CEA10) (Neosartorya fumigata).